A 259-amino-acid polypeptide reads, in one-letter code: Tryptophan synthase alpha chain (259 aa).

Catalysis depends on proton acceptor residues Glu-42 and Asp-53.

It belongs to the TrpA family. Tetramer of two alpha and two beta chains.

It carries out the reaction (1S,2R)-1-C-(indol-3-yl)glycerol 3-phosphate + L-serine = D-glyceraldehyde 3-phosphate + L-tryptophan + H2O. Its pathway is amino-acid biosynthesis; L-tryptophan biosynthesis; L-tryptophan from chorismate: step 5/5. Functionally, the alpha subunit is responsible for the aldol cleavage of indoleglycerol phosphate to indole and glyceraldehyde 3-phosphate. This chain is Tryptophan synthase alpha chain, found in Erythrobacter litoralis (strain HTCC2594).